A 663-amino-acid chain; its full sequence is Protein-arginine deiminase type-1 (663 aa).

Asn153, Asp155, Asp157, Asp165, Asp176, Asp179, Gln351, Glu353, Lys364, Asp371, Ser372, Asn375, Phe409, and Leu412 together coordinate Ca(2+). The active-site Nucleophile is Cys645.

It belongs to the protein arginine deiminase family. Monomer. Requires Ca(2+) as cofactor. In terms of tissue distribution, detected in epidermal keratinocytes (at protein level). Epidermis, prostate, testis, placenta, spleen and thymus.

The protein resides in the cytoplasm. It catalyses the reaction L-arginyl-[protein] + H2O = L-citrullyl-[protein] + NH4(+). Catalyzes the deimination of arginine residues of proteins. The polypeptide is Protein-arginine deiminase type-1 (PADI1) (Homo sapiens (Human)).